The chain runs to 296 residues: Ribosomal protein L11 methyltransferase (296 aa).

S-adenosyl-L-methionine-binding residues include Thr139, Gly163, Asp185, and Asn232.

It belongs to the methyltransferase superfamily. PrmA family.

The protein localises to the cytoplasm. The enzyme catalyses L-lysyl-[protein] + 3 S-adenosyl-L-methionine = N(6),N(6),N(6)-trimethyl-L-lysyl-[protein] + 3 S-adenosyl-L-homocysteine + 3 H(+). In terms of biological role, methylates ribosomal protein L11. This chain is Ribosomal protein L11 methyltransferase, found in Picosynechococcus sp. (strain ATCC 27264 / PCC 7002 / PR-6) (Agmenellum quadruplicatum).